The sequence spans 248 residues: Phosphomannomutase (248 aa).

Asp-14 acts as the Nucleophile in catalysis. Residues Asp-14 and Asp-16 each contribute to the Mg(2+) site. Asp-16 (proton donor/acceptor) is an active-site residue. Alpha-D-mannose 1-phosphate contacts are provided by Arg-23, Arg-125, Arg-136, Arg-143, Ser-181, and Asp-183. Asp-209, Phe-221, and Thr-226 together coordinate Mg(2+).

Belongs to the eukaryotic PMM family. Homodimer. The cofactor is Mg(2+).

The protein localises to the cytoplasm. It carries out the reaction alpha-D-mannose 1-phosphate = D-mannose 6-phosphate. It functions in the pathway nucleotide-sugar biosynthesis; GDP-alpha-D-mannose biosynthesis; alpha-D-mannose 1-phosphate from D-fructose 6-phosphate: step 2/2. Its function is as follows. Catalyzes the interconversion of mannose-6-phosphate to mannose-1-phosphate, the precursor for the synthesis of GDP-mannose. GDP-mannose is an essential sugar nucleotide for the synthesis of D-mannose-containing cell wall polysaccharides (galactomannans and glucomannans), glycolipids, glycoproteins and the antioxidant L-ascorbate. This Oryza sativa subsp. indica (Rice) protein is Phosphomannomutase.